Consider the following 427-residue polypeptide: Histidinol dehydrogenase (427 aa).

Tyr123, Gln185, and Asn208 together coordinate NAD(+). Substrate is bound by residues Ser231, Gln253, and His256. Positions 253 and 256 each coordinate Zn(2+). Active-site proton acceptor residues include Glu321 and His322. 4 residues coordinate substrate: His322, Asp355, Glu409, and His414. Position 355 (Asp355) interacts with Zn(2+). Zn(2+) is bound at residue His414.

This sequence belongs to the histidinol dehydrogenase family. Requires Zn(2+) as cofactor.

The enzyme catalyses L-histidinol + 2 NAD(+) + H2O = L-histidine + 2 NADH + 3 H(+). It functions in the pathway amino-acid biosynthesis; L-histidine biosynthesis; L-histidine from 5-phospho-alpha-D-ribose 1-diphosphate: step 9/9. In terms of biological role, catalyzes the sequential NAD-dependent oxidations of L-histidinol to L-histidinaldehyde and then to L-histidine. The polypeptide is Histidinol dehydrogenase (hisD) (Bacillus subtilis (strain 168)).